The sequence spans 150 residues: Probable deoxyuridine 5'-triphosphate nucleotidohydrolase (150 aa).

This sequence belongs to the dCTP deaminase family. Archaeal dUTPase subfamily.

It catalyses the reaction dUTP + H2O = dUMP + diphosphate + H(+). It functions in the pathway pyrimidine metabolism; dUMP biosynthesis; dUMP from dCTP (dUTP route): step 2/2. Functionally, this enzyme is involved in nucleotide metabolism: it produces dUMP, the immediate precursor of thymidine nucleotides and it decreases the intracellular concentration of dUTP so that uracil cannot be incorporated into DNA. This Methanothermobacter thermautotrophicus (strain ATCC 29096 / DSM 1053 / JCM 10044 / NBRC 100330 / Delta H) (Methanobacterium thermoautotrophicum) protein is Probable deoxyuridine 5'-triphosphate nucleotidohydrolase.